Consider the following 301-residue polypeptide: 33 kDa chaperonin (301 aa).

2 disulfides stabilise this stretch: Cys-239–Cys-241 and Cys-272–Cys-275.

This sequence belongs to the HSP33 family. Post-translationally, under oxidizing conditions two disulfide bonds are formed involving the reactive cysteines. Under reducing conditions zinc is bound to the reactive cysteines and the protein is inactive.

It is found in the cytoplasm. Its function is as follows. Redox regulated molecular chaperone. Protects both thermally unfolding and oxidatively damaged proteins from irreversible aggregation. Plays an important role in the bacterial defense system toward oxidative stress. This Nostoc sp. (strain PCC 7120 / SAG 25.82 / UTEX 2576) protein is 33 kDa chaperonin.